The primary structure comprises 330 residues: Phosphate acyltransferase (330 aa).

This sequence belongs to the PlsX family. In terms of assembly, homodimer. Probably interacts with PlsY.

It localises to the cytoplasm. The catalysed reaction is a fatty acyl-[ACP] + phosphate = an acyl phosphate + holo-[ACP]. The protein operates within lipid metabolism; phospholipid metabolism. Functionally, catalyzes the reversible formation of acyl-phosphate (acyl-PO(4)) from acyl-[acyl-carrier-protein] (acyl-ACP). This enzyme utilizes acyl-ACP as fatty acyl donor, but not acyl-CoA. This is Phosphate acyltransferase from Bacillus anthracis (strain A0248).